Here is a 203-residue protein sequence, read N- to C-terminus: Translation initiation factor IF-3 (203 aa).

Positions 172-182 (EAPKNEKKTKE) are enriched in basic and acidic residues. A disordered region spans residues 172–203 (EAPKNEKKTKENNPPFNRINLMKGENHAKNED).

Belongs to the IF-3 family. Monomer.

The protein localises to the cytoplasm. In terms of biological role, IF-3 binds to the 30S ribosomal subunit and shifts the equilibrium between 70S ribosomes and their 50S and 30S subunits in favor of the free subunits, thus enhancing the availability of 30S subunits on which protein synthesis initiation begins. This chain is Translation initiation factor IF-3, found in Helicobacter pylori (strain J99 / ATCC 700824) (Campylobacter pylori J99).